A 120-amino-acid chain; its full sequence is NAD(P)H-quinone oxidoreductase subunit 3 (120 aa).

3 helical membrane-spanning segments follow: residues 1-21 (MFVL…SLVP), 64-84 (MFAL…PWAV), and 89-109 (LGLL…VALV).

It belongs to the complex I subunit 3 family. NDH-1 can be composed of about 15 different subunits; different subcomplexes with different compositions have been identified which probably have different functions.

It is found in the cellular thylakoid membrane. The catalysed reaction is a plastoquinone + NADH + (n+1) H(+)(in) = a plastoquinol + NAD(+) + n H(+)(out). It catalyses the reaction a plastoquinone + NADPH + (n+1) H(+)(in) = a plastoquinol + NADP(+) + n H(+)(out). Functionally, NDH-1 shuttles electrons from an unknown electron donor, via FMN and iron-sulfur (Fe-S) centers, to quinones in the respiratory and/or the photosynthetic chain. The immediate electron acceptor for the enzyme in this species is believed to be plastoquinone. Couples the redox reaction to proton translocation, and thus conserves the redox energy in a proton gradient. Cyanobacterial NDH-1 also plays a role in inorganic carbon-concentration. The polypeptide is NAD(P)H-quinone oxidoreductase subunit 3 (Nostoc punctiforme (strain ATCC 29133 / PCC 73102)).